The primary structure comprises 124 residues: MSGRGKSGKARTKAKSRSSRAGLQFPVGRVHRFLRKGNYAKRVGGGAPVYMAAVLEYLTAEILELAGNAARDNKKSRIIPRHLQLAVRNDEELNKLLGGVTIAQGGVLPNIQAVLLPKKTGKSS.

A compositionally biased stretch (basic residues) spans 1–18 (MSGRGKSGKARTKAKSRS). A disordered region spans residues 1–21 (MSGRGKSGKARTKAKSRSSRA). S2 bears the N-acetylserine mark. S2 bears the Phosphoserine mark. At Q104 the chain carries N5-methylglutamine. Residue K119 forms a Glycyl lysine isopeptide (Lys-Gly) (interchain with G-Cter in ubiquitin) linkage.

This sequence belongs to the histone H2A family. The nucleosome is a histone octamer containing two molecules each of H2A, H2B, H3 and H4 assembled in one H3-H4 heterotetramer and two H2A-H2B heterodimers. The octamer wraps approximately 147 bp of DNA. Monoubiquitination of Lys-119 gives a specific tag for epigenetic transcriptional repression. Post-translationally, phosphorylation of Ser-2 directly represses transcription.

The protein localises to the nucleus. It localises to the chromosome. In terms of biological role, core component of nucleosome. Nucleosomes wrap and compact DNA into chromatin, limiting DNA accessibility to the cellular machineries which require DNA as a template. Histones thereby play a central role in transcription regulation, DNA repair, DNA replication and chromosomal stability. DNA accessibility is regulated via a complex set of post-translational modifications of histones, also called histone code, and nucleosome remodeling. The polypeptide is Histone H2A (Paracentrotus lividus (Common sea urchin)).